The following is a 236-amino-acid chain: Uridylate kinase (236 aa).

10 to 13 (KLSG) lines the ATP pocket. Glycine 52 lines the UMP pocket. Residues glycine 53 and arginine 57 each contribute to the ATP site. Residues aspartate 72 and 133 to 140 (TGNPFFTT) each bind UMP. 3 residues coordinate ATP: threonine 160, tyrosine 166, and aspartate 169.

This sequence belongs to the UMP kinase family. In terms of assembly, homohexamer.

It is found in the cytoplasm. The catalysed reaction is UMP + ATP = UDP + ADP. The protein operates within pyrimidine metabolism; CTP biosynthesis via de novo pathway; UDP from UMP (UMPK route): step 1/1. Its activity is regulated as follows. Inhibited by UTP. In terms of biological role, catalyzes the reversible phosphorylation of UMP to UDP. The chain is Uridylate kinase from Polaromonas naphthalenivorans (strain CJ2).